The primary structure comprises 432 residues: Trigger factor (432 aa).

Residues 161 to 246 form the PPIase FKBP-type domain; the sequence is EDRVTLDFTG…LKKVEERELP (86 aa).

Belongs to the FKBP-type PPIase family. Tig subfamily.

The protein localises to the cytoplasm. It catalyses the reaction [protein]-peptidylproline (omega=180) = [protein]-peptidylproline (omega=0). In terms of biological role, involved in protein export. Acts as a chaperone by maintaining the newly synthesized protein in an open conformation. Functions as a peptidyl-prolyl cis-trans isomerase. The chain is Trigger factor from Salmonella arizonae (strain ATCC BAA-731 / CDC346-86 / RSK2980).